Here is a 227-residue protein sequence, read N- to C-terminus: UPF0173 metal-dependent hydrolase BC_4613 (227 aa).

Belongs to the UPF0173 family.

This Bacillus cereus (strain ATCC 14579 / DSM 31 / CCUG 7414 / JCM 2152 / NBRC 15305 / NCIMB 9373 / NCTC 2599 / NRRL B-3711) protein is UPF0173 metal-dependent hydrolase BC_4613.